We begin with the raw amino-acid sequence, 398 residues long: Acetate kinase (398 aa).

A Mg(2+)-binding site is contributed by asparagine 8. An ATP-binding site is contributed by lysine 15. A substrate-binding site is contributed by arginine 89. The Proton donor/acceptor role is filled by aspartate 146. ATP contacts are provided by residues 206 to 210 (HIGNG), 283 to 285 (DMR), and 331 to 335 (GMGEN). Glutamate 383 provides a ligand contact to Mg(2+).

The protein belongs to the acetokinase family. Homodimer. The cofactor is Mg(2+). Mn(2+) serves as cofactor.

The protein resides in the cytoplasm. It catalyses the reaction acetate + ATP = acetyl phosphate + ADP. Its pathway is metabolic intermediate biosynthesis; acetyl-CoA biosynthesis; acetyl-CoA from acetate: step 1/2. Functionally, catalyzes the formation of acetyl phosphate from acetate and ATP. Can also catalyze the reverse reaction. This chain is Acetate kinase, found in Streptococcus pyogenes serotype M1.